A 419-amino-acid polypeptide reads, in one-letter code: 3-isopropylmalate dehydratase large subunit (419 aa).

Residues cysteine 300, cysteine 360, and cysteine 363 each coordinate [4Fe-4S] cluster.

The protein belongs to the aconitase/IPM isomerase family. LeuC type 2 subfamily. Heterodimer of LeuC and LeuD. It depends on [4Fe-4S] cluster as a cofactor.

It catalyses the reaction (2R,3S)-3-isopropylmalate = (2S)-2-isopropylmalate. Its pathway is amino-acid biosynthesis; L-leucine biosynthesis; L-leucine from 3-methyl-2-oxobutanoate: step 2/4. Catalyzes the isomerization between 2-isopropylmalate and 3-isopropylmalate, via the formation of 2-isopropylmaleate. This Nitratidesulfovibrio vulgaris (strain ATCC 29579 / DSM 644 / CCUG 34227 / NCIMB 8303 / VKM B-1760 / Hildenborough) (Desulfovibrio vulgaris) protein is 3-isopropylmalate dehydratase large subunit.